The following is a 215-amino-acid chain: uncharacterized protein (215 aa).

Positions 25–48 (LKSASPGPAPASQQASSFGSAPAQ) are disordered. Over residues 27–47 (SASPGPAPASQQASSFGSAPA) the composition is skewed to low complexity.

This is an uncharacterized protein from Homo sapiens (Human).